An 814-amino-acid polypeptide reads, in one-letter code: Protein kinase C-binding protein NELL2 (814 aa).

An N-terminal signal peptide occupies residues 1 to 19 (MEFILGIFCVLFCLRAGAG). Asparagine 51, asparagine 223, and asparagine 296 each carry an N-linked (GlcNAc...) asparagine glycan. A Laminin G-like domain is found at 53–226 (SKAFLFQDTS…SQCPDLNRTC (174 aa)). Residues 270–329 (RSCTVKGNIYRELESWMDGCKKCTCTNGTAQCETLTCSAPNCLSGFSPAYVPGKCCKECQ) form the VWFC 1 domain. Positions 395–437 (GHDFCSEGHNCMGYSICKNLDDKAVCICRDGFRALREDNAYCE) constitute an EGF-like 1 domain. Cystine bridges form between cysteine 399-cysteine 411, cysteine 405-cysteine 420, and cysteine 422-cysteine 436. Ca(2+) contacts are provided by aspartate 438, isoleucine 439, and glutamate 441. Residues 438 to 479 (DIDECTEGRHYCRENTVCVNTPGSFMCVCQTGYLKIDDYSCT) enclose the EGF-like 2; calcium-binding domain. Disulfide bonds link cysteine 442-cysteine 455, cysteine 449-cysteine 464, cysteine 466-cysteine 478, cysteine 484-cysteine 497, cysteine 491-cysteine 506, cysteine 508-cysteine 519, cysteine 523-cysteine 533, cysteine 527-cysteine 539, and cysteine 541-cysteine 550. Ca(2+)-binding residues include asparagine 457, threonine 458, and serine 461. The region spanning 480 to 520 (EHNECATNQHSCDENAMCFNTVGGHNCVCQPGYTGNGTDCR) is the EGF-like 3; calcium-binding domain. An N-linked (GlcNAc...) asparagine glycan is attached at asparagine 515. Residues 521 to 551 (AFCKDGCRNGGTCIAPNICACPQGFTGPSCE) form the EGF-like 4 domain. Ca(2+)-binding residues include aspartate 553, isoleucine 554, and glutamate 556. The 47-residue stretch at 553–599 (DIDECTEGFVQCDSRANCINLPGWYHCECRDGYHDNGMFSLGGESCE) folds into the EGF-like 5; calcium-binding domain. Cystine bridges form between cysteine 557/cysteine 570, cysteine 564/cysteine 579, and cysteine 581/cysteine 598. Positions 572, 573, and 576 each coordinate Ca(2+). Positions 600, 601, and 603 each coordinate Ca(2+). Residues 600–635 (DIDECATGRHSCSNDTVCFNLDGGFDCRCPHGKNCS) enclose the EGF-like 6; calcium-binding domain. Cystine bridges form between cysteine 604/cysteine 617, cysteine 611/cysteine 626, and cysteine 628/cysteine 634. N-linked (GlcNAc...) asparagine glycosylation occurs at asparagine 613. Ca(2+)-binding residues include asparagine 619, leucine 620, and glycine 623. Residue asparagine 633 is glycosylated (N-linked (GlcNAc...) asparagine). VWFC domains lie at 636–691 (GDCT…PECD) and 696–754 (SQCL…PRCV).

Homotrimer.

The protein resides in the secreted. Its function is as follows. May regulate neuronal differentiation, polarization and axon guidance. This Xenopus laevis (African clawed frog) protein is Protein kinase C-binding protein NELL2 (nell2.L).